A 538-amino-acid polypeptide reads, in one-letter code: Diacylglycerol O-acyltransferase 1-1 (538 aa).

Disordered regions lie at residues 1-39 and 54-106; these read MVGS…GAIV and AAAA…GGGR. Over residues 69–83 the composition is skewed to low complexity; that stretch reads EAASGEPSSSSSSSP. 7 helical membrane passes run 136 to 156, 186 to 206, 218 to 238, 245 to 265, 293 to 313, 326 to 346, and 382 to 402; these read AIFK…LVAV, WPLL…FAVE, VATC…VLVI, VLSG…LVSF, NLQP…TLCY, GWLI…GFII, and LWLC…AEIL. An FYXDWWN motif motif is present at residues 409-415; the sequence is FYKDWWN. The next 3 membrane-spanning stretches (helical) occupy residues 451–471, 474–494, and 505–525; these read VAVL…VAVP, ILKF…VLTA, and VGNM…CLLL. Histidine 464 is a catalytic residue.

It belongs to the membrane-bound acyltransferase family. Sterol o-acyltransferase subfamily.

The protein localises to the endoplasmic reticulum membrane. The enzyme catalyses an acyl-CoA + a 1,2-diacyl-sn-glycerol = a triacyl-sn-glycerol + CoA. Its pathway is glycerolipid metabolism; triacylglycerol biosynthesis. Involved in triacylglycerol (TAG) synthesis. Catalyzes the acylation of the sn-3 hydroxy group of sn-1,2-diacylglycerol using acyl-CoA. In Oryza sativa subsp. japonica (Rice), this protein is Diacylglycerol O-acyltransferase 1-1.